We begin with the raw amino-acid sequence, 214 residues long: Ribosomal protein uL16-like (214 aa).

The protein belongs to the universal ribosomal protein uL16 family. Component of a male germ cell-specific 60S large ribosomal subunit (LSU), which contains RPL10L and RPL39L, instead of RPL10 and RPL39 paralogs. The composition of the rest of the complex is similar to classical ribosomes. In terms of tissue distribution, almost testis-specific. Also expressed in pre- and postmenopausal ovary.

Its subcellular location is the cytoplasm. Its function is as follows. Testis-specific component of the ribosome, which is required for the transition from prophase to metaphase in male meiosis I. Compensates for the inactivated X-linked RPL10 paralog during spermatogenesis. The ribosome is a large ribonucleoprotein complex responsible for the synthesis of proteins in the cell. The male germ cell-specific ribosome displays a ribosomal polypeptide exit tunnel of distinct size and charge states compared with the classical ribosome. It is responsible for regulating the biosynthesis and folding of a subset of male germ-cell-specific proteins that are essential for the formation of sperm. In Homo sapiens (Human), this protein is Ribosomal protein uL16-like.